A 503-amino-acid polypeptide reads, in one-letter code: Proton-coupled zinc antiporter SLC30A1 (503 aa).

The Cytoplasmic portion of the chain corresponds to 1 to 10; it reads MGCWGRNRGR. The helical transmembrane segment at 11–31 threads the bilayer; the sequence is LLCMLLLTFMFMVLEVVVSRV. At 32 to 35 the chain is on the extracellular side; it reads TASL. A helical membrane pass occupies residues 36-56; sequence AMLSDSFHMLSDVLALVVALV. Residues His-43 and Asp-47 each contribute to the Zn(2+) site. Topologically, residues 57 to 78 are cytoplasmic; sequence AERFARRTHATQKNTFGWIRAE. The helical transmembrane segment at 79–99 threads the bilayer; the sequence is VMGALVNAIFLTGLCFAILLE. Residues 100–113 lie on the Extracellular side of the membrane; sequence AVERFIEPHEMQQP. A helical transmembrane segment spans residues 114 to 134; it reads LVVLSVGVAGLLVNVLGLCLF. The Cytoplasmic portion of the chain corresponds to 135 to 243; it reads HHHSGEGQGA…RAGQLNMRGV (109 aa). Residues 140-213 are disordered; it reads EGQGAGHGHS…PEKLRSDDPV (74 aa). The interval 145–156 is 6 X 2 AA approximate repeats of H-G; sequence GHGHSHGHGHGH. A compositionally biased stretch (basic residues) spans 147–165; it reads GHSHGHGHGHLAKGARKAG. Residues 184–196 are compositionally biased toward polar residues; it reads TNTLVANTSNSNG. The span at 200–211 shows a compositional bias: basic and acidic residues; the sequence is DQAEPEKLRSDD. Residues 244–264 form a helical membrane-spanning segment; that stretch reads FLHVLGDALGSVIVVVNALVF. Residues His-246 and Asp-250 each contribute to the Zn(2+) site. Residues 265 to 303 lie on the Extracellular side of the membrane; sequence YFNWKGCTEDDFCTNPCFPDPCKSSVEIINSTQAPMRDA. Asn-294 carries N-linked (GlcNAc...) asparagine glycosylation. A helical membrane pass occupies residues 304 to 324; the sequence is GPCWVLYLDPTLCIIMVCILL. At 325-503 the chain is on the cytoplasmic side; sequence YTTYPLLKES…VPNKQPESSL (179 aa). Ser-502 bears the Phosphoserine mark.

Belongs to the cation diffusion facilitator (CDF) transporter (TC 2.A.4) family. SLC30A subfamily. As to quaternary structure, homodimer. Interacts with TMEM163. Interacts and forms a complex with TMC6 and TMC8; the interaction regulates zinc transport into the ER. Widely expressed.

The protein resides in the cell membrane. It is found in the basolateral cell membrane. Its subcellular location is the cytoplasmic vesicle membrane. It localises to the cytoplasm. The protein localises to the endoplasmic reticulum membrane. The protein resides in the golgi apparatus membrane. It is found in the nucleus membrane. The enzyme catalyses Zn(2+)(in) + 2 H(+)(out) = Zn(2+)(out) + 2 H(+)(in). In terms of biological role, zinc ion:proton antiporter that could function at the plasma membrane mediating zinc efflux from cells against its electrochemical gradient protecting them from intracellular zinc accumulation and toxicity. Alternatively, could prevent the transport to the plasma membrane of CACNB2, the L-type calcium channels regulatory subunit, through a yet to be defined mechanism. By modulating the expression of these channels at the plasma membrane, could prevent calcium and zinc influx into cells. By the same mechanism, could also prevent L-type calcium channels-mediated heavy metal influx into cells. In some cells, could also function as a zinc ion:proton antiporter mediating zinc entry into the lumen of cytoplasmic vesicles. In macrophages, can increase zinc ions concentration into the lumen of cytoplasmic vesicles containing engulfed bacteria and could help inactivate them. Forms a complex with TMC6/EVER1 and TMC8/EVER2 at the ER membrane of keratynocytes which facilitates zinc uptake into the ER. Down-regulates the activity of transcription factors induced by zinc and cytokines. This Mus musculus (Mouse) protein is Proton-coupled zinc antiporter SLC30A1.